A 434-amino-acid chain; its full sequence is Protein maelstrom homolog (434 aa).

The segment at residues 4–73 (RRASRNAYYF…AQGKDSGPSE (70 aa)) is a DNA-binding region (HMG box).

This sequence belongs to the maelstrom family. Interacts with SMARCB1, SIN3B and DDX4. Interacts with piRNA-associated proteins TDRD1, PIWIL1 and PIWIL2. Interacts with Tex19.1 and, probably, Tex19.2. In terms of tissue distribution, testis-specific. Present in spermatocytes and round and early elongating spermatids.

Its subcellular location is the cytoplasm. It localises to the nucleus. Plays a central role during spermatogenesis by repressing transposable elements and preventing their mobilization, which is essential for the germline integrity. Acts via the piRNA metabolic process, which mediates the repression of transposable elements during meiosis by forming complexes composed of piRNAs and Piwi proteins and governs the methylation and subsequent repression of transposons. Its association with piP-bodies suggests a participation in the secondary piRNAs metabolic process. Required for the localization of germ-cell factors to the meiotic nuage. The protein is Protein maelstrom homolog of Mus musculus (Mouse).